The chain runs to 150 residues: UPF0756 membrane protein HAPS_1649 (150 aa).

Helical transmembrane passes span 1-21, 27-46, 52-72, 82-102, and 123-143; these read MSLQ…LGIF, VTIS…SKYV, YGIK…LVSG, LINW…WLGG, and IIGV…AGIL.

The protein belongs to the UPF0756 family.

The protein localises to the cell membrane. The sequence is that of UPF0756 membrane protein HAPS_1649 from Glaesserella parasuis serovar 5 (strain SH0165) (Haemophilus parasuis).